The following is a 150-amino-acid chain: Endoribonuclease YbeY (150 aa).

Residues His102, His106, and His112 each coordinate Zn(2+).

It belongs to the endoribonuclease YbeY family. The cofactor is Zn(2+).

It is found in the cytoplasm. In terms of biological role, single strand-specific metallo-endoribonuclease involved in late-stage 70S ribosome quality control and in maturation of the 3' terminus of the 16S rRNA. This is Endoribonuclease YbeY from Thermotoga petrophila (strain ATCC BAA-488 / DSM 13995 / JCM 10881 / RKU-1).